Reading from the N-terminus, the 28-residue chain is Beta-bungarotoxin B chain-like (28 aa).

A signal peptide spans 1-24 (MSSGGLLLLLGLLTLCAELTPVSS).

In terms of assembly, heterodimer; disulfide-linked. The A chains have phospholipase A2 activity and the B chains show homology with the basic protease inhibitors. As to expression, expressed by the venom gland.

It localises to the secreted. Beta-1-bungarotoxin is a presynaptic neurotoxin of the venom. The B chain is homologous to venom basic protease inhibitors but has no protease inhibitor activity and blocks voltage-gated potassium channels (Kv). The protein is Beta-bungarotoxin B chain-like of Bungarus multicinctus (Many-banded krait).